We begin with the raw amino-acid sequence, 366 residues long: Putative RING-H2 finger protein ATL21C (366 aa).

Residues 1-23 form the signal peptide; that stretch reads MTFSKQLFPFVFFLLFLVSLRHA. The helical transmembrane segment at 243–263 threads the bilayer; the sequence is LVLVISLSAVTVFVFPTCIAI. The segment at 320 to 362 adopts an RING-type; atypical zinc-finger fold; that stretch reads CPICLSEYASKETVRFIPECDHCFHVECIDVWLKIHGSCPLCR.

It belongs to the RING-type zinc finger family. ATL subfamily.

The protein localises to the membrane. The enzyme catalyses S-ubiquitinyl-[E2 ubiquitin-conjugating enzyme]-L-cysteine + [acceptor protein]-L-lysine = [E2 ubiquitin-conjugating enzyme]-L-cysteine + N(6)-ubiquitinyl-[acceptor protein]-L-lysine.. Its pathway is protein modification; protein ubiquitination. In Arabidopsis thaliana (Mouse-ear cress), this protein is Putative RING-H2 finger protein ATL21C (ATL21C).